Consider the following 747-residue polypeptide: DNA-directed RNA polymerase subunit beta' (747 aa).

Cys-70, Cys-72, Cys-97, and Cys-100 together coordinate Zn(2+). 3 residues coordinate Mg(2+): Asp-502, Asp-504, and Asp-506.

Belongs to the RNA polymerase beta' chain family. RpoC1 subfamily. In terms of assembly, in plastids the minimal PEP RNA polymerase catalytic core is composed of four subunits: alpha, beta, beta', and beta''. When a (nuclear-encoded) sigma factor is associated with the core the holoenzyme is formed, which can initiate transcription. Requires Mg(2+) as cofactor. Zn(2+) is required as a cofactor.

It is found in the plastid. The protein localises to the chloroplast. It carries out the reaction RNA(n) + a ribonucleoside 5'-triphosphate = RNA(n+1) + diphosphate. Functionally, DNA-dependent RNA polymerase catalyzes the transcription of DNA into RNA using the four ribonucleoside triphosphates as substrates. This Gnetum parvifolium (Small-leaved jointfir) protein is DNA-directed RNA polymerase subunit beta'.